A 303-amino-acid polypeptide reads, in one-letter code: N-acetyl-D-glucosamine kinase (303 aa).

ATP-binding positions include 4–11 (GFDIGGTK) and 133–140 (GVGGGLVL). Residues His157, Cys177, Cys179, and Cys184 each coordinate Zn(2+).

It belongs to the ROK (NagC/XylR) family. NagK subfamily.

The catalysed reaction is N-acetyl-D-glucosamine + ATP = N-acetyl-D-glucosamine 6-phosphate + ADP + H(+). It functions in the pathway cell wall biogenesis; peptidoglycan recycling. Functionally, catalyzes the phosphorylation of N-acetyl-D-glucosamine (GlcNAc) derived from cell-wall degradation, yielding GlcNAc-6-P. The polypeptide is N-acetyl-D-glucosamine kinase (Salmonella heidelberg (strain SL476)).